A 138-amino-acid polypeptide reads, in one-letter code: MRTFWIVAVLLVGVEGNLLQFNKMIKIMTKKNAIPSYSSYGCYCGWGGRGRPKDATDRCCFVHDCCYEKLTDCSPKTDTYSYSLKSGVIICGGNDPCKKQICECDKAAAVCFGENLSTYKKRYMFYPDFLCTDPSETC.

The signal sequence occupies residues 1 to 16 (MRTFWIVAVLLVGVEG). Disulfide bonds link Cys42–Cys131, Cys44–Cys60, Cys59–Cys111, Cys65–Cys138, Cys66–Cys104, Cys73–Cys97, and Cys91–Cys102. Ca(2+)-binding residues include Tyr43, Gly45, and Gly47. His63 is a catalytic residue. Asp64 serves as a coordination point for Ca(2+). Residue Asp105 is part of the active site.

This sequence belongs to the phospholipase A2 family. Group II subfamily. D49 sub-subfamily. Ca(2+) serves as cofactor. Expressed by the venom gland.

The protein localises to the secreted. The catalysed reaction is a 1,2-diacyl-sn-glycero-3-phosphocholine + H2O = a 1-acyl-sn-glycero-3-phosphocholine + a fatty acid + H(+). Its function is as follows. Snake venom phospholipase A2 (PLA2) that displays edema-inducing activities, as well as presynaptic neurotoxicity and low myotoxicity. PLA2 catalyzes the calcium-dependent hydrolysis of the 2-acyl groups in 3-sn-phosphoglycerides. The sequence is that of Basic phospholipase A2 Sct-N6 from Sistrurus tergeminus (Western massasauga).